The chain runs to 147 residues: Peptide methionine sulfoxide reductase MsrA (147 aa).

Residue C10 is part of the active site.

It belongs to the MsrA Met sulfoxide reductase family.

The catalysed reaction is L-methionyl-[protein] + [thioredoxin]-disulfide + H2O = L-methionyl-(S)-S-oxide-[protein] + [thioredoxin]-dithiol. It carries out the reaction [thioredoxin]-disulfide + L-methionine + H2O = L-methionine (S)-S-oxide + [thioredoxin]-dithiol. Its function is as follows. Has an important function as a repair enzyme for proteins that have been inactivated by oxidation. Catalyzes the reversible oxidation-reduction of methionine sulfoxide in proteins to methionine. This Pelagibacter ubique (strain HTCC1062) protein is Peptide methionine sulfoxide reductase MsrA.